The following is a 304-amino-acid chain: Elongation factor Ts (304 aa).

An involved in Mg(2+) ion dislocation from EF-Tu region spans residues 80–83 (TDFV).

The protein belongs to the EF-Ts family.

Its subcellular location is the cytoplasm. Functionally, associates with the EF-Tu.GDP complex and induces the exchange of GDP to GTP. It remains bound to the aminoacyl-tRNA.EF-Tu.GTP complex up to the GTP hydrolysis stage on the ribosome. The sequence is that of Elongation factor Ts from Clostridium tetani (strain Massachusetts / E88).